We begin with the raw amino-acid sequence, 113 residues long: Ig kappa chain V-II region 26-10 (113 aa).

Positions Asp1–Cys23 are framework-1. A disulfide bridge connects residues Cys23 and Cys93. A complementarity-determining-1 region spans residues Arg24–Asn39. The tract at residues Trp40–Tyr54 is framework-2. The tract at residues Lys55–Ser61 is complementarity-determining-2. Residues Gly62–Cys93 are framework-3. Residues Ser94–Thr102 form a complementarity-determining-3 region. The tract at residues Phe103 to Lys112 is framework-4.

This chain is Ig kappa chain V-II region 26-10, found in Mus musculus (Mouse).